The following is a 391-amino-acid chain: Carbamoyl phosphate synthase small chain (391 aa).

A CPSase region spans residues 1–199 (MVRISGFCCA…TWEFIEGPTT (199 aa)). 3 residues coordinate L-glutamine: S61, G251, and G253. Residues 203 to 388 (TVVAIDFGVK…VALMRDRQPT (186 aa)) form the Glutamine amidotransferase type-1 domain. Catalysis depends on C279, which acts as the Nucleophile. 5 residues coordinate L-glutamine: L280, Q283, N319, G321, and F322. Residues H361 and E363 contribute to the active site.

The protein belongs to the CarA family. Composed of two chains; the small (or glutamine) chain promotes the hydrolysis of glutamine to ammonia, which is used by the large (or ammonia) chain to synthesize carbamoyl phosphate. Tetramer of heterodimers (alpha,beta)4.

It catalyses the reaction hydrogencarbonate + L-glutamine + 2 ATP + H2O = carbamoyl phosphate + L-glutamate + 2 ADP + phosphate + 2 H(+). The catalysed reaction is L-glutamine + H2O = L-glutamate + NH4(+). Its pathway is amino-acid biosynthesis; L-arginine biosynthesis; carbamoyl phosphate from bicarbonate: step 1/1. It participates in pyrimidine metabolism; UMP biosynthesis via de novo pathway; (S)-dihydroorotate from bicarbonate: step 1/3. In terms of biological role, small subunit of the glutamine-dependent carbamoyl phosphate synthetase (CPSase). CPSase catalyzes the formation of carbamoyl phosphate from the ammonia moiety of glutamine, carbonate, and phosphate donated by ATP, constituting the first step of 2 biosynthetic pathways, one leading to arginine and/or urea and the other to pyrimidine nucleotides. The small subunit (glutamine amidotransferase) binds and cleaves glutamine to supply the large subunit with the substrate ammonia. The sequence is that of Carbamoyl phosphate synthase small chain from Synechococcus sp. (strain ATCC 27144 / PCC 6301 / SAUG 1402/1) (Anacystis nidulans).